Here is a 530-residue protein sequence, read N- to C-terminus: Phosphoenolpyruvate carboxykinase (ATP) (530 aa).

The substrate site is built by Arg58, Tyr195, and Lys201. ATP-binding positions include Lys201, His220, and 236–244 (GLSGTGKTT). Mn(2+) contacts are provided by Lys201 and His220. Asp257 contributes to the Mn(2+) binding site. ATP-binding positions include Glu285, Arg321, 440–441 (RI), and Thr446. Arg321 contacts substrate.

It belongs to the phosphoenolpyruvate carboxykinase (ATP) family. The cofactor is Mn(2+).

The protein resides in the cytoplasm. It carries out the reaction oxaloacetate + ATP = phosphoenolpyruvate + ADP + CO2. It functions in the pathway carbohydrate biosynthesis; gluconeogenesis. Involved in the gluconeogenesis. Catalyzes the conversion of oxaloacetate (OAA) to phosphoenolpyruvate (PEP) through direct phosphoryl transfer between the nucleoside triphosphate and OAA. This chain is Phosphoenolpyruvate carboxykinase (ATP), found in Staphylococcus epidermidis (strain ATCC 35984 / DSM 28319 / BCRC 17069 / CCUG 31568 / BM 3577 / RP62A).